A 428-amino-acid chain; its full sequence is Histidinol dehydrogenase (428 aa).

Positions 127, 185, and 208 each coordinate NAD(+). Substrate-binding residues include serine 234, glutamine 256, and histidine 259. Positions 256 and 259 each coordinate Zn(2+). Catalysis depends on proton acceptor residues glutamate 323 and histidine 324. Residues histidine 324, aspartate 357, glutamate 411, and histidine 416 each contribute to the substrate site. A Zn(2+)-binding site is contributed by aspartate 357. A Zn(2+)-binding site is contributed by histidine 416.

Belongs to the histidinol dehydrogenase family. The cofactor is Zn(2+).

The enzyme catalyses L-histidinol + 2 NAD(+) + H2O = L-histidine + 2 NADH + 3 H(+). It participates in amino-acid biosynthesis; L-histidine biosynthesis; L-histidine from 5-phospho-alpha-D-ribose 1-diphosphate: step 9/9. Its function is as follows. Catalyzes the sequential NAD-dependent oxidations of L-histidinol to L-histidinaldehyde and then to L-histidine. This chain is Histidinol dehydrogenase, found in Mannheimia succiniciproducens (strain KCTC 0769BP / MBEL55E).